Reading from the N-terminus, the 272-residue chain is Putative phosphoenolpyruvate synthase regulatory protein (272 aa).

Residue Gly-152–Thr-159 coordinates ADP.

This sequence belongs to the pyruvate, phosphate/water dikinase regulatory protein family. PSRP subfamily.

It carries out the reaction [pyruvate, water dikinase] + ADP = [pyruvate, water dikinase]-phosphate + AMP + H(+). It catalyses the reaction [pyruvate, water dikinase]-phosphate + phosphate + H(+) = [pyruvate, water dikinase] + diphosphate. Its function is as follows. Bifunctional serine/threonine kinase and phosphorylase involved in the regulation of the phosphoenolpyruvate synthase (PEPS) by catalyzing its phosphorylation/dephosphorylation. The sequence is that of Putative phosphoenolpyruvate synthase regulatory protein from Pseudomonas putida (strain ATCC 700007 / DSM 6899 / JCM 31910 / BCRC 17059 / LMG 24140 / F1).